A 149-amino-acid polypeptide reads, in one-letter code: MEVILLEKVRNLGNLGDKVHVKSGYGRNYLIPQNKAVFATEQNIELFQKRRAELEKKAQQALANAEQRAAKLNDTTIVISAMASDEGKLYGSVGVNEIKDALIEKQIEISKREIVMPEGPLHSIGNYVVEVHVHSDVVANLQVEIISAK.

This sequence belongs to the bacterial ribosomal protein bL9 family.

Functionally, binds to the 23S rRNA. The sequence is that of Large ribosomal subunit protein bL9 from Legionella pneumophila (strain Paris).